A 534-amino-acid chain; its full sequence is CTP synthase (534 aa).

Residues 1–267 (MTKYIFVTGG…DQIVCDHLKL (267 aa)) form an amidoligase domain region. Serine 13 serves as a coordination point for CTP. Serine 13 contacts UTP. Position 14–19 (14–19 (SIGKGI)) interacts with ATP. Tyrosine 54 contacts L-glutamine. Position 71 (aspartate 71) interacts with ATP. Positions 71 and 141 each coordinate Mg(2+). CTP is bound by residues 148–150 (DIE), 188–193 (KTKPTQ), and lysine 224. UTP contacts are provided by residues 188-193 (KTKPTQ) and lysine 224. Residue 240–242 (RDV) coordinates ATP. Residues 292–534 (KIALVGKYVE…FVTAAIKNSN (243 aa)) form the Glutamine amidotransferase type-1 domain. Glycine 354 is a binding site for L-glutamine. Cysteine 381 (nucleophile; for glutamine hydrolysis) is an active-site residue. Residues 382–385 (LGMQ), glutamate 405, and arginine 463 each bind L-glutamine. Catalysis depends on residues histidine 508 and glutamate 510.

It belongs to the CTP synthase family. Homotetramer.

It catalyses the reaction UTP + L-glutamine + ATP + H2O = CTP + L-glutamate + ADP + phosphate + 2 H(+). The catalysed reaction is L-glutamine + H2O = L-glutamate + NH4(+). It carries out the reaction UTP + NH4(+) + ATP = CTP + ADP + phosphate + 2 H(+). It participates in pyrimidine metabolism; CTP biosynthesis via de novo pathway; CTP from UDP: step 2/2. With respect to regulation, allosterically activated by GTP, when glutamine is the substrate; GTP has no effect on the reaction when ammonia is the substrate. The allosteric effector GTP functions by stabilizing the protein conformation that binds the tetrahedral intermediate(s) formed during glutamine hydrolysis. Inhibited by the product CTP, via allosteric rather than competitive inhibition. Functionally, catalyzes the ATP-dependent amination of UTP to CTP with either L-glutamine or ammonia as the source of nitrogen. Regulates intracellular CTP levels through interactions with the four ribonucleotide triphosphates. The polypeptide is CTP synthase (Streptococcus pyogenes serotype M2 (strain MGAS10270)).